Consider the following 393-residue polypeptide: Methyltransferase-like protein 22 (393 aa).

Residues 54 to 87 form a disordered region; that stretch reads WTDSGAEDSGPTDVSTEEMPPAGSGSGHSHEDLS. At Ser-120 the chain carries Phosphoserine.

This sequence belongs to the methyltransferase superfamily. METTL22 family. Interacts with members of the heat shock protein 90 and 70 families; these proteins probably are methylation substrates.

The protein localises to the nucleus. The enzyme catalyses L-lysyl-[protein] + 3 S-adenosyl-L-methionine = N(6),N(6),N(6)-trimethyl-L-lysyl-[protein] + 3 S-adenosyl-L-homocysteine + 3 H(+). Protein N-lysine methyltransferase. Trimethylates KIN at Lys-135 (in vitro). The polypeptide is Methyltransferase-like protein 22 (Mettl22) (Mus musculus (Mouse)).